Consider the following 303-residue polypeptide: Sulfate adenylyltransferase subunit 2 (303 aa).

It belongs to the PAPS reductase family. CysD subfamily. As to quaternary structure, heterodimer composed of CysD, the smaller subunit, and CysN.

The catalysed reaction is sulfate + ATP + H(+) = adenosine 5'-phosphosulfate + diphosphate. The protein operates within sulfur metabolism; hydrogen sulfide biosynthesis; sulfite from sulfate: step 1/3. With CysN forms the ATP sulfurylase (ATPS) that catalyzes the adenylation of sulfate producing adenosine 5'-phosphosulfate (APS) and diphosphate, the first enzymatic step in sulfur assimilation pathway. APS synthesis involves the formation of a high-energy phosphoric-sulfuric acid anhydride bond driven by GTP hydrolysis by CysN coupled to ATP hydrolysis by CysD. The chain is Sulfate adenylyltransferase subunit 2 from Sulfurovum sp. (strain NBC37-1).